A 142-amino-acid chain; its full sequence is Large ribosomal subunit protein uL13 (142 aa).

The protein belongs to the universal ribosomal protein uL13 family. As to quaternary structure, part of the 50S ribosomal subunit.

Functionally, this protein is one of the early assembly proteins of the 50S ribosomal subunit, although it is not seen to bind rRNA by itself. It is important during the early stages of 50S assembly. The polypeptide is Large ribosomal subunit protein uL13 (Buchnera aphidicola subsp. Schizaphis graminum (strain Sg)).